The following is a 213-amino-acid chain: Uridine kinase (213 aa).

An ATP-binding site is contributed by 13-20; it reads GASASGKS.

It belongs to the uridine kinase family.

It localises to the cytoplasm. The catalysed reaction is uridine + ATP = UMP + ADP + H(+). It carries out the reaction cytidine + ATP = CMP + ADP + H(+). The protein operates within pyrimidine metabolism; CTP biosynthesis via salvage pathway; CTP from cytidine: step 1/3. It functions in the pathway pyrimidine metabolism; UMP biosynthesis via salvage pathway; UMP from uridine: step 1/1. This is Uridine kinase from Histophilus somni (strain 129Pt) (Haemophilus somnus).